The primary structure comprises 391 residues: Ferrochelatase (391 aa).

Residues H196 and E281 each coordinate Fe cation.

Belongs to the ferrochelatase family.

Its subcellular location is the cytoplasm. The catalysed reaction is heme b + 2 H(+) = protoporphyrin IX + Fe(2+). It participates in porphyrin-containing compound metabolism; protoheme biosynthesis; protoheme from protoporphyrin-IX: step 1/1. Catalyzes the ferrous insertion into protoporphyrin IX. The polypeptide is Ferrochelatase (Prochlorococcus marinus (strain MIT 9515)).